The following is a 257-amino-acid chain: Hydroxypyruvate/pyruvate aldolase (257 aa).

Residue His-48 is the Proton acceptor of the active site. A divalent metal cation contacts are provided by Glu-152 and Asp-178.

This sequence belongs to the HpcH/HpaI aldolase family. A divalent metal cation is required as a cofactor.

The catalysed reaction is D-glyceraldehyde + 3-hydroxypyruvate = 2-dehydro-D-gluconate. The enzyme catalyses D-glyceraldehyde + pyruvate = 2-dehydro-3-deoxy-L-galactonate. It carries out the reaction 2-dehydro-3-deoxy-D-gluconate = D-glyceraldehyde + pyruvate. Aldolase which can catalyze in vitro the aldolisation reaction between hydroxypyruvate (HPA) or pyruvate (PA) and D-glyceraldehyde (D-GA). The condensation of hydroxypyruvate and D-glyceraldehyde produces 2-dehydro-D-gluconate as the major product. The condensation of pyruvate and D-glyceraldehyde produces 2-dehydro-3-deoxy-L-galactonate as the major product and 2-dehydro-3-deoxy-D-gluconate. The chain is Hydroxypyruvate/pyruvate aldolase from Roseovarius nubinhibens (strain ATCC BAA-591 / DSM 15170 / ISM).